Consider the following 267-residue polypeptide: Trehalose-phosphate phosphatase (267 aa).

Asp20 serves as the catalytic Nucleophile. Residues Asp20, Asp22, and Asp198 each coordinate Mg(2+). Residue Asp20–Asp22 participates in substrate binding.

Belongs to the trehalose phosphatase family. Requires Mg(2+) as cofactor.

The catalysed reaction is alpha,alpha-trehalose 6-phosphate + H2O = alpha,alpha-trehalose + phosphate. It functions in the pathway glycan biosynthesis; trehalose biosynthesis. In terms of biological role, removes the phosphate from trehalose 6-phosphate to produce free trehalose. In Salmonella typhimurium (strain SL1344), this protein is Trehalose-phosphate phosphatase (otsB).